The following is a 474-amino-acid chain: MATGWGSLLQDEQQLEELARQAVDRALAEGVLLRTSQAPSSSHVVSYAPFTLFPSPVPSALLEQAYAVQADFNLLVDAVSQNAVFLEQTLSSTIKRDSFTARLFDIHKQVLKEGIAQTVFLGLNRSDYMFQCNPDGSAALKQIEINTVSASFGGLASRTPAVHRHVLSVLGKTKEAAKILSNNPSKGLAMGIAKAWELYGSANAQVLLIAQEKERNIFDQRAIENELLARNIHVIRRKFEDVSEKGSLDQDRRLFMDGQEIAVVYFRDGYMPGHYSLQNWEARLLLERSCAVKCPDIATQLAGTKKVQQELSRVGVLESFLPGQPEAVARLRATFAGLYSLDLGEEGDQAITKAIAAPSCFVLKPQREGGGNNLYGEEMVQALERLKDSEERASYILMEKIEPEPFRNCLLRPGSPARVIQCISELGIFGVYVREGKTLVMNKHVGHLLRTKAIEHADGGVAAGVAVLDNPYPV.

A2 carries the N-acetylalanine modification. A substrate-binding site is contributed by R125. E144 contributes to the ATP binding site. Positions 144 and 146 each coordinate Mg(2+). Substrate contacts are provided by residues 148 to 151, 214 to 216, Q220, and 267 to 270; these read VSAS, ERN, and RDGY. ATP-binding positions include K305, 364 to 373, Y375, and 398 to 401; these read KPQREGGGNN and MEKI. Position 368 (E368) interacts with Mg(2+). At S415 the chain carries Phosphoserine. E425 serves as a coordination point for ATP. Residue R450 coordinates substrate. K452 and D458 together coordinate ATP. Residue 461–462 participates in substrate binding; sequence VA.

It belongs to the eukaryotic GSH synthase family. In terms of assembly, homodimer. Mg(2+) serves as cofactor.

It catalyses the reaction gamma-L-glutamyl-L-cysteine + glycine + ATP = glutathione + ADP + phosphate + H(+). It carries out the reaction gamma-L-glutamyl-(2S)-2-aminobutanoate + glycine + ATP = ophthalmate + ADP + phosphate + H(+). It functions in the pathway sulfur metabolism; glutathione biosynthesis; glutathione from L-cysteine and L-glutamate: step 2/2. In terms of biological role, catalyzes the production of glutathione from gamma-glutamylcysteine and glycine in an ATP-dependent manner. Glutathione (gamma-glutamylcysteinylglycine, GSH) is the most abundant intracellular thiol in living aerobic cells and is required for numerous processes including the protection of cells against oxidative damage, amino acid transport, the detoxification of foreign compounds, the maintenance of protein sulfhydryl groups in a reduced state and acts as a cofactor for a number of enzymes. Participates in ophthalmate biosynthesis in hepatocytes. This is Glutathione synthetase from Bos taurus (Bovine).